A 327-amino-acid chain; its full sequence is Phenylalanine--tRNA ligase alpha subunit (327 aa).

Glutamate 252 serves as a coordination point for Mg(2+).

The protein belongs to the class-II aminoacyl-tRNA synthetase family. Phe-tRNA synthetase alpha subunit type 1 subfamily. In terms of assembly, tetramer of two alpha and two beta subunits. The cofactor is Mg(2+).

The protein localises to the cytoplasm. The catalysed reaction is tRNA(Phe) + L-phenylalanine + ATP = L-phenylalanyl-tRNA(Phe) + AMP + diphosphate + H(+). This Salmonella newport (strain SL254) protein is Phenylalanine--tRNA ligase alpha subunit.